The chain runs to 473 residues: Spliceosome-associated protein CWC27 homolog (473 aa).

At Ser-2 the chain carries N-acetylserine. One can recognise a PPIase cyclophilin-type domain in the interval 11 to 166 (TNGKVLLKTT…NPHKIKSCEV (156 aa)). Positions 177 to 193 (REIKRPKKEKPEEEVKK) are enriched in basic and acidic residues. Disordered regions lie at residues 177–386 (REIK…EDQT) and 399–473 (QAIA…KERR). Residues 206–230 (SFGEEAEEEEEEVNRVSQSMKGKSK) adopt a coiled-coil conformation. Over residues 231 to 241 (SSHDLLKDDPH) the composition is skewed to basic and acidic residues. Residues 257–275 (GDLDDDGEDESAEYDEYVD) show a composition bias toward acidic residues. Composition is skewed to basic and acidic residues over residues 276-287 (GDEKNLMRERIA), 305-348 (EVEK…KRSE), and 360-372 (EYRR…EALR). Residues 307 to 378 (EKKSVSRSEE…EALRKQQSKK (72 aa)) are a coiled coil. Ser-347 bears the Phosphoserine mark. A compositionally biased stretch (acidic residues) spans 405–419 (PENDIPETEVEDDEG). Basic and acidic residues-rich tracts occupy residues 426–438 (QFED…KDAS) and 458–473 (RREE…KERR).

The protein belongs to the cyclophilin-type PPIase family. In terms of assembly, part of the activated spliceosome B/catalytic step 1 spliceosome, one of the forms of the spliceosome which has a well-formed active site but still cannot catalyze the branching reaction and is composed at least of 52 proteins, the U2, U5 and U6 snRNAs and the pre-mRNA. Recruited during early steps of activated spliceosome B maturation, it is probably one of the first proteins released from this complex as he matures to the spliceosome C complex. Component of the minor spliceosome, which splices U12-type introns.

The protein resides in the nucleus. As part of the spliceosome, plays a role in pre-mRNA splicing. Probable inactive PPIase with no peptidyl-prolyl cis-trans isomerase activity. As a component of the minor spliceosome, involved in the splicing of U12-type introns in pre-mRNAs. The chain is Spliceosome-associated protein CWC27 homolog from Macaca fascicularis (Crab-eating macaque).